A 611-amino-acid polypeptide reads, in one-letter code: MAMRSHYCGLVTDTLLGQTVTLCGWVNRRRDHGGVIFVDIRDREGYVQVVCDPDRADMFKVAEGLRNEFCIQVKGLVRARPEGTVNEGLKSGKIEVLCHELTVLNPSVTPPFQLDDDNLSETTRLTHRVLDLRRPYMQNNLMLRYRVAMEVRKFLDANGFVDIETPMLGKSTPEGARDYLVPSRVHEGHFFALPQSPQLFKQLLMVAGFDRYYQITKCFRDEDLRADRQPEFTQIDIETSFLSEQDIRDLFQEMITTVFKTTLNVDLGEFPVMAYSEAMHRYGSDKPDLRVKLEFTELTDVMTDVDFKVFSGAATMKGGRVVGLRIPGGAREVGGLSRGEIDAYAEFVKIYGAKGLAYIKVNELAKGPGDKALRWPGLQSPIVKNIHDKAIAEVLARTGAQDGDLIFFGADKAKIVNDAIGALRIKIGHSEFGKKNALFEKSWRPMWVVDFPMFEFDEEAQRYTAVHHPFTAPKEGHEDWMVTAPEKCISQGYDMVLNGWEMGGGSVRIHRADVQQKVFDALKISPEEAQDKFGFLLDALQYGAPPHGGLAFGLDRIITLMTGAESIRDVIAFPKTQRAQCLLTQAPSPVDEKQLRELHIRLRTPEPIKAA.

E174 is a binding site for L-aspartate. The tract at residues 198 to 201 (QLFK) is aspartate. R220 lines the L-aspartate pocket. ATP is bound by residues 220–222 (RDE) and Q229. L-aspartate is bound at residue H467. ATP is bound at residue E501. R508 lines the L-aspartate pocket. ATP is bound at residue 553 to 556 (GLDR).

Belongs to the class-II aminoacyl-tRNA synthetase family. Type 1 subfamily. In terms of assembly, homodimer.

Its subcellular location is the cytoplasm. The enzyme catalyses tRNA(Asx) + L-aspartate + ATP = L-aspartyl-tRNA(Asx) + AMP + diphosphate. In terms of biological role, aspartyl-tRNA synthetase with relaxed tRNA specificity since it is able to aspartylate not only its cognate tRNA(Asp) but also tRNA(Asn). Reaction proceeds in two steps: L-aspartate is first activated by ATP to form Asp-AMP and then transferred to the acceptor end of tRNA(Asp/Asn). This chain is Aspartate--tRNA(Asp/Asn) ligase, found in Albidiferax ferrireducens (strain ATCC BAA-621 / DSM 15236 / T118) (Rhodoferax ferrireducens).